A 545-amino-acid polypeptide reads, in one-letter code: Serine/threonine-protein kinase PAK 1 (545 aa).

The tract at residues 1–75 is disordered; the sequence is MSNNGVDIQD…KKREKERPEI (75 aa). Serine 2 carries the N-acetylserine modification. Position 21 is a phosphoserine; by PKB and autocatalysis (serine 21). A Phosphoserine; by autocatalysis modification is found at serine 57. Residues 70–140 form an autoregulatory region region; the sequence is KERPEISLPS…YNSKKTSNSK (71 aa). The CRIB domain maps to 75–88; that stretch reads ISLPSDFEHTIHVG. Residues 75-105 form a GTPase-binding region; the sequence is ISLPSDFEHTIHVGFDAVTGEFTGMPEQWAR. Residue threonine 84 is modified to Phosphothreonine; by OXSR1. At serine 115 the chain carries Phosphoserine. Residues tyrosine 131 and tyrosine 142 each carry the phosphotyrosine modification. Phosphoserine; by autocatalysis is present on residues serine 144 and serine 149. A disordered region spans residues 150 to 198; it reads AEDYNSSNTLNVKTVSETPAVPPVSEDDEDDDDDATPPPVIAPRPEHTK. Residues 152–166 are compositionally biased toward polar residues; the sequence is DYNSSNTLNVKTVSE. A Phosphotyrosine; by JAK2 modification is found at tyrosine 153. Phosphoserine is present on serine 174. The span at 174–184 shows a compositional bias: acidic residues; sequence SEDDEDDDDDA. Threonine 185 bears the Phosphothreonine mark. Serine 199 carries the post-translational modification Phosphoserine; by autocatalysis. Residue tyrosine 201 is modified to Phosphotyrosine; by JAK2. Phosphoserine; by autocatalysis is present on serine 204. The segment at 210–250 is disordered; that stretch reads PVTPTRDVATSPISPTENNTTPPDALTRNTEKQKKKPKMSD. Threonine 212 and threonine 219 each carry phosphothreonine. Serine 220 and serine 223 each carry phosphoserine. Polar residues predominate over residues 220–231; it reads SPISPTENNTTP. A phosphothreonine mark is found at threonine 225, threonine 229, and threonine 230. The 252-residue stretch at 270–521 folds into the Protein kinase domain; the sequence is YTPFEKIGQG…AKELLQHQFL (252 aa). 276-284 contacts ATP; that stretch reads IGQGASGTV. Tyrosine 285 bears the Phosphotyrosine; by JAK2 mark. Residue lysine 299 coordinates ATP. Aspartate 389 serves as the catalytic Proton acceptor. Threonine 423 is subject to Phosphothreonine; by autocatalysis, BRSK2 and PDPK1.

The protein belongs to the protein kinase superfamily. STE Ser/Thr protein kinase family. STE20 subfamily. Homodimer in its autoinhibited state. Active as monomer. Interacts with GIT1. Component of cytoplasmic complexes, which also contains PXN, ARHGEF7 and GIT1. Interacts with NISCH. Interacts with DVL1; mediates the formation of a DVL1, MUSK and PAK1 ternary complex involved in AChR clustering. Binds to the caspase-cleaved p110 isoform of CDC2L1 and CDC2L2, p110C, but not the full-length proteins. Interacts with ARHGEF7. Interacts tightly with GTP-bound but not GDP-bound CDC42/P21 and RAC1. Interacts with SCRIB. Interacts with PDPK1. Interacts (via kinase domain) with RAF1. Interacts with NCK1 and NCK2. Interacts with TBCB. Interacts with BRSK2. Interacts with SNAI1. Interacts with CIB1 (via N-terminal region); the interaction is direct, promotes PAK1 activity and occurs in a calcium-dependent manner. Interacts with INPP5K. Interacts with gamma-tubulin. Interacts with RHOU; the interaction promotes PAK1 activation. Mg(2+) serves as cofactor. Autophosphorylated in trans, meaning that in a dimer, one kinase molecule phosphorylates the other one. Activated by autophosphorylation at Thr-423 in response to a conformation change, triggered by interaction with GTP-bound CDC42 or RAC1. Activated by phosphorylation at Thr-423 by BRSK2 and by PDPK1. Phosphorylated by JAK2 in response to PRL; this increases PAK1 kinase activity. Phosphorylated at Ser-21 by PKB/AKT; this reduces interaction with NCK1 and association with focal adhesion sites. Upon DNA damage, phosphorylated at Thr-212 and translocates to the nucleoplasm. Phosphorylated at tyrosine residues, which can be enhanced by NTN1.

The protein resides in the cytoplasm. It is found in the cell junction. It localises to the focal adhesion. Its subcellular location is the cell projection. The protein localises to the lamellipodium. The protein resides in the cell membrane. It is found in the ruffle membrane. It localises to the invadopodium. Its subcellular location is the nucleus. The protein localises to the nucleoplasm. The protein resides in the chromosome. It is found in the cytoskeleton. It localises to the microtubule organizing center. Its subcellular location is the centrosome. The catalysed reaction is L-seryl-[protein] + ATP = O-phospho-L-seryl-[protein] + ADP + H(+). The enzyme catalyses L-threonyl-[protein] + ATP = O-phospho-L-threonyl-[protein] + ADP + H(+). Phosphorylation of Thr-84 by OXSR1 inhibits activation. Activated by binding small G proteins. Binding of GTP-bound CDC42 or RAC1 to the autoregulatory region releases monomers from the autoinhibited dimer, and enables activation by phosphorylation of Thr-423. Protein kinase involved in intracellular signaling pathways downstream of integrins and receptor-type kinases that plays an important role in cytoskeleton dynamics, in cell adhesion, migration, proliferation, apoptosis, mitosis, and in vesicle-mediated transport processes. Can directly phosphorylate BAD and protects cells against apoptosis. Activated by interaction with CDC42 and RAC1. Functions as a GTPase effector that links the Rho-related GTPases CDC42 and RAC1 to the JNK MAP kinase pathway. Phosphorylates and activates MAP2K1, and thereby mediates activation of downstream MAP kinases. Involved in the reorganization of the actin cytoskeleton, actin stress fibers and of focal adhesion complexes. Phosphorylates the tubulin chaperone TBCB and thereby plays a role in the regulation of microtubule biogenesis and organization of the tubulin cytoskeleton. Plays a role in the regulation of insulin secretion in response to elevated glucose levels. Part of a ternary complex that contains PAK1, DVL1 and MUSK that is important for MUSK-dependent regulation of AChR clustering during the formation of the neuromuscular junction (NMJ). Activity is inhibited in cells undergoing apoptosis, potentially due to binding of CDC2L1 and CDC2L2. Phosphorylates MYL9/MLC2. Phosphorylates RAF1 at 'Ser-338' and 'Ser-339' resulting in: activation of RAF1, stimulation of RAF1 translocation to mitochondria, phosphorylation of BAD by RAF1, and RAF1 binding to BCL2. Phosphorylates SNAI1 at 'Ser-246' promoting its transcriptional repressor activity by increasing its accumulation in the nucleus. In podocytes, promotes NR3C2 nuclear localization. Required for atypical chemokine receptor ACKR2-induced phosphorylation of LIMK1 and cofilin (CFL1) and for the up-regulation of ACKR2 from endosomal compartment to cell membrane, increasing its efficiency in chemokine uptake and degradation. In synapses, seems to mediate the regulation of F-actin cluster formation performed by SHANK3, maybe through CFL1 phosphorylation and inactivation. Plays a role in RUFY3-mediated facilitating gastric cancer cells migration and invasion. In response to DNA damage, phosphorylates MORC2 which activates its ATPase activity and facilitates chromatin remodeling. In neurons, plays a crucial role in regulating GABA(A) receptor synaptic stability and hence GABAergic inhibitory synaptic transmission through its role in F-actin stabilization. In hippocampal neurons, necessary for the formation of dendritic spines and excitatory synapses; this function is dependent on kinase activity and may be exerted by the regulation of actomyosin contractility through the phosphorylation of myosin II regulatory light chain (MLC). Along with GIT1, positively regulates microtubule nucleation during interphase. Phosphorylates FXR1, promoting its localization to stress granules and activity. Phosphorylates ILK on 'Thr-173' and 'Ser-246', promoting nuclear export of ILK. This is Serine/threonine-protein kinase PAK 1 from Mus musculus (Mouse).